The sequence spans 81 residues: Sec-independent protein translocase protein TatA (81 aa).

Residues 1 to 21 (MGMPSGQELLIILAIVVLLFG) form a helical membrane-spanning segment. Positions 45–81 (NEDDDTEVKSASTEAPKKVESAEEVASKESSKTPTQA) are disordered. Positions 59 to 75 (APKKVESAEEVASKESS) are enriched in basic and acidic residues.

It belongs to the TatA/E family. In terms of assembly, the Tat system comprises two distinct complexes: a TatABC complex, containing multiple copies of TatA, TatB and TatC subunits, and a separate TatA complex, containing only TatA subunits. Substrates initially bind to the TatABC complex, which probably triggers association of the separate TatA complex to form the active translocon.

The protein resides in the cell inner membrane. Its function is as follows. Part of the twin-arginine translocation (Tat) system that transports large folded proteins containing a characteristic twin-arginine motif in their signal peptide across membranes. TatA could form the protein-conducting channel of the Tat system. The sequence is that of Sec-independent protein translocase protein TatA from Sulfurimonas denitrificans (strain ATCC 33889 / DSM 1251) (Thiomicrospira denitrificans (strain ATCC 33889 / DSM 1251)).